Here is a 189-residue protein sequence, read N- to C-terminus: Ras-like protein 1 (189 aa).

10 to 17 (GAGGVGKS) contributes to the GTP binding site. The short motif at 32 to 40 (YDPTIEDSY) is the Effector region element. Residues 57-61 (DTAGQ) and 116-119 (NKCD) each bind GTP. C186 bears the Cysteine methyl ester mark. C186 is lipidated: S-geranylgeranyl cysteine. A propeptide spans 187-189 (KML) (removed in mature form).

Belongs to the small GTPase superfamily. Ras family.

Its subcellular location is the cell membrane. The catalysed reaction is GTP + H2O = GDP + phosphate + H(+). Alternates between an inactive form bound to GDP and an active form bound to GTP. Activated by a guanine nucleotide-exchange factor (GEF) and inactivated by a GTPase-activating protein (GAP). Functionally, ras proteins bind GDP/GTP and possess intrinsic GTPase activity. Plays a role in eye development by regulating cell growth, survival of postmitotic ommatidial cells and differentiation of photoreceptor cells. During larval development, mediates Ptth/tor signaling leading to the production of ecdysone, a hormone required for the initiation of metamorphosis. This is Ras-like protein 1 from Drosophila ananassae (Fruit fly).